The primary structure comprises 222 residues: Beta-casein (222 aa).

Residues M1–A15 form the signal peptide. The residue at position 27 (T27) is a Phosphothreonine. S30, S32, S33, and S34 each carry phosphoserine.

It belongs to the beta-casein family. Mammary gland specific. Secreted in milk.

It localises to the secreted. In terms of biological role, important role in determination of the surface properties of the casein micelles. This chain is Beta-casein (CSN2), found in Ovis aries (Sheep).